Consider the following 101-residue polypeptide: Early E3A 11.6 kDa glycoprotein (101 aa).

N-linked (GlcNAc...) asparagine; by host glycosylation is present at Asn14. Residues 41–62 form a helical membrane-spanning segment; that stretch reads MWWFSIALMFVCLIIMWLICCL.

This sequence belongs to the adenoviridae E3A-1 family. Post-translationally, N-glycosylated and probably also O-glycosylated.

It is found in the host nucleus membrane. This Human adenovirus C serotype 6 (HAdV-6) protein is Early E3A 11.6 kDa glycoprotein.